The primary structure comprises 97 residues: Integration host factor subunit beta (97 aa).

This sequence belongs to the bacterial histone-like protein family. As to quaternary structure, heterodimer of an alpha and a beta chain.

Functionally, this protein is one of the two subunits of integration host factor, a specific DNA-binding protein that functions in genetic recombination as well as in transcriptional and translational control. This chain is Integration host factor subunit beta, found in Buchnera aphidicola subsp. Cinara cedri (strain Cc).